Consider the following 315-residue polypeptide: FGFR1 oncogene partner 2 homolog (315 aa).

Coiled-coil stretches lie at residues 32–99 (EEAE…RAME) and 156–183 (VVQR…ISKQ). Disordered stretches follow at residues 201–222 (KAVQ…SGAS) and 238–315 (PEQP…APAT). A compositionally biased stretch (polar residues) spans 246-269 (GTTNSFNTAPVHSQSETQAPSVTL).

It belongs to the SIKE family.

This chain is FGFR1 oncogene partner 2 homolog, found in Drosophila melanogaster (Fruit fly).